Here is a 284-residue protein sequence, read N- to C-terminus: 2-dehydro-3-deoxyphosphooctonate aldolase (284 aa).

It belongs to the KdsA family.

The protein resides in the cytoplasm. The enzyme catalyses D-arabinose 5-phosphate + phosphoenolpyruvate + H2O = 3-deoxy-alpha-D-manno-2-octulosonate-8-phosphate + phosphate. The protein operates within carbohydrate biosynthesis; 3-deoxy-D-manno-octulosonate biosynthesis; 3-deoxy-D-manno-octulosonate from D-ribulose 5-phosphate: step 2/3. It participates in bacterial outer membrane biogenesis; lipopolysaccharide biosynthesis. This Photorhabdus laumondii subsp. laumondii (strain DSM 15139 / CIP 105565 / TT01) (Photorhabdus luminescens subsp. laumondii) protein is 2-dehydro-3-deoxyphosphooctonate aldolase.